A 776-amino-acid chain; its full sequence is General transcription and DNA repair factor IIH helicase subunit XPD (776 aa).

The region spanning 7–277 (DLLVYFPYSY…KKVDEKRLKD (271 aa)) is the Helicase ATP-binding domain. 42-49 (MPSGTGKT) contacts ATP. The [4Fe-4S] cluster site is built by Cys115, Cys133, Cys150, and Cys184. The short motif at 228–231 (DEAH) is the DEAH box element. The disordered stretch occupies residues 736–776 (HVEKQSTSKPPQQQNSAINSTITTSTTTTTTTSTISETHLT). The segment covering 742–754 (TSKPPQQQNSAIN) has biased composition (polar residues). Over residues 755–776 (STITTSTTTTTTTSTISETHLT) the composition is skewed to low complexity.

Belongs to the helicase family. RAD3/XPD subfamily. In terms of assembly, component of the 7-subunit TFIIH core complex composed of XPB/repB, XPD/repD, gtf2h1, gtf2h2, gtf2h3, gtf2h4 and gtf2h5, which is active in NER. The core complex associates with the 3-subunit CDK-activating kinase (CAK) module composed of cycH/cyclin H, cdk7 and mnat1 to form the 10-subunit holoenzyme (holo-TFIIH) active in transcription. The cofactor is Mg(2+). [4Fe-4S] cluster is required as a cofactor.

The protein localises to the nucleus. It catalyses the reaction Couples ATP hydrolysis with the unwinding of duplex DNA at the replication fork by translocating in the 5'-3' direction. This creates two antiparallel DNA single strands (ssDNA). The leading ssDNA polymer is the template for DNA polymerase III holoenzyme which synthesizes a continuous strand.. The catalysed reaction is ATP + H2O = ADP + phosphate + H(+). In terms of biological role, ATP-dependent 5'-3' DNA helicase, component of the general transcription and DNA repair factor IIH (TFIIH) core complex, which is involved in general and transcription-coupled nucleotide excision repair (NER) of damaged DNA and, when complexed to CDK-activating kinase (CAK), in transcription by RNA polymerase II. In NER, TFIIH acts by opening DNA around the lesion to allow the excision of the damaged oligonucleotide and its replacement by a new DNA fragment. The ATP-dependent helicase activity of XPD/repD is required for DNA opening. In transcription, TFIIH has an essential role in transcription initiation. When the pre-initiation complex (PIC) has been established, TFIIH is required for promoter opening and promoter escape. Phosphorylation of the C-terminal tail (CTD) of the largest subunit of RNA polymerase II by the kinase module CAK controls the initiation of transcription. XPD/repD acts by forming a bridge between CAK and the core-TFIIH complex. The polypeptide is General transcription and DNA repair factor IIH helicase subunit XPD (Dictyostelium discoideum (Social amoeba)).